Reading from the N-terminus, the 484-residue chain is Vanillin dehydrogenase (484 aa).

NADP(+) is bound by residues 156 to 157 (WN), 180 to 183 (KPAS), and 234 to 235 (GS). Residues K180 and 234–239 (GSTPVG) contribute to the NAD(+) site. E258 serves as the catalytic Proton acceptor. L259 is an NADP(+) binding site. The Nucleophile role is filled by C292. Positions 339 and 386 each coordinate NAD(+). E386 provides a ligand contact to NADP(+).

This sequence belongs to the aldehyde dehydrogenase family. As to quaternary structure, exists as a homodimer, homotrimer and homotetramer.

It catalyses the reaction vanillin + NAD(+) + H2O = vanillate + NADH + 2 H(+). The catalysed reaction is vanillin + NADP(+) + H2O = vanillate + NADPH + 2 H(+). It carries out the reaction 3,4-dihydroxybenzaldehyde + NAD(+) + H2O = 3,4-dihydroxybenzoate + NADH + 2 H(+). The enzyme catalyses 3,4-dihydroxybenzaldehyde + NADP(+) + H2O = 3,4-dihydroxybenzoate + NADPH + 2 H(+). It catalyses the reaction 4-hydroxybenzaldehyde + NAD(+) + H2O = 4-hydroxybenzoate + NADH + 2 H(+). The catalysed reaction is 4-hydroxybenzaldehyde + NADP(+) + H2O = 4-hydroxybenzoate + NADPH + 2 H(+). In terms of biological role, catalyzes oxidation of vanillin to vanillate. Also oxidizes 3,4-dihydroxybenzaldehyde and 4-hydroxybenzaldehyde significantly. Other aromatic aldehyde substrates in the order of decreasing activity include 3-hydroxybenzaldehyde, 4-nitrobenzaldehyde, terephthalaldehyde, 2,4-dichlorobenzaldehyde, benzaldehyde and 3-phenylpropanal. Low activity with phthalaldehyde, cinnamaldehyde and syringaldehyde. No activity with phenylacetaldehyde, formaldehyde or aldehyde. Active with both NAD(+) and NADP(+). Involved in the degradation pathway of lignin-derived aromatic compounds of plant cell walls. Catalyzes the conversion of vanillin to vanillate due to toxicity of vanillin to the cells. The chain is Vanillin dehydrogenase from Corynebacterium glutamicum (strain ATCC 13032 / DSM 20300 / JCM 1318 / BCRC 11384 / CCUG 27702 / LMG 3730 / NBRC 12168 / NCIMB 10025 / NRRL B-2784 / 534).